The sequence spans 84 residues: MFTLKKPLLLIVLLGMISLSLCEQERNADEEEGSEIKRGIFSKLAGKKLKNLLISGLKNVGKEVGMDVVRTGIDIAGCKIKGEC.

The signal sequence occupies residues 1-22 (MFTLKKPLLLIVLLGMISLSLC). Positions 23-38 (EQERNADEEEGSEIKR) are excised as a propeptide. Cysteine 78 and cysteine 84 are joined by a disulfide.

The protein belongs to the frog skin active peptide (FSAP) family. Brevinin subfamily. As to expression, expressed by the skin glands.

It localises to the secreted. In terms of biological role, shows antibacterial activity against representative Gram-negative and Gram-positive bacterial species, and hemolytic activity. The sequence is that of Esculentin-1B from Pelophylax lessonae (Pool frog).